We begin with the raw amino-acid sequence, 230 residues long: Uracil-DNA glycosylase (230 aa).

Residue aspartate 70 is the Proton acceptor of the active site.

It belongs to the uracil-DNA glycosylase (UDG) superfamily. UNG family.

The protein resides in the cytoplasm. The catalysed reaction is Hydrolyzes single-stranded DNA or mismatched double-stranded DNA and polynucleotides, releasing free uracil.. Its function is as follows. Excises uracil residues from the DNA which can arise as a result of misincorporation of dUMP residues by DNA polymerase or due to deamination of cytosine. This is Uracil-DNA glycosylase from Pseudomonas syringae pv. tomato (strain ATCC BAA-871 / DC3000).